Reading from the N-terminus, the 78-residue chain is Putative membrane protein insertion efficiency factor (78 aa).

The protein belongs to the UPF0161 family.

The protein resides in the cell inner membrane. In terms of biological role, could be involved in insertion of integral membrane proteins into the membrane. This Prochlorococcus marinus (strain MIT 9301) protein is Putative membrane protein insertion efficiency factor.